A 190-amino-acid chain; its full sequence is Segregation and condensation protein B (190 aa).

Belongs to the ScpB family. In terms of assembly, homodimer. Homodimerization may be required to stabilize the binding of ScpA to the Smc head domains. Component of a cohesin-like complex composed of ScpA, ScpB and the Smc homodimer, in which ScpA and ScpB bind to the head domain of Smc. The presence of the three proteins is required for the association of the complex with DNA.

It localises to the cytoplasm. Participates in chromosomal partition during cell division. May act via the formation of a condensin-like complex containing Smc and ScpA that pull DNA away from mid-cell into both cell halves. This Bacillus cereus (strain ATCC 10987 / NRS 248) protein is Segregation and condensation protein B.